A 511-amino-acid chain; its full sequence is Endoglucanase B (511 aa).

The N-terminal stretch at 1-29 is a signal peptide; sequence MNLLSGWVRPLMLGCGLLGAALSAGSIQA. In terms of domain architecture, CBM2 spans 30–130; sequence AVCEYRVTNE…AVTGAICGGQ (101 aa). A disulfide bridge links Cys-32 with Cys-127. The interval 137 to 173 is disordered; it reads SVASSSSSSSVVSSTPRSSSSSVSSSVPGTSSSSSSS. The CBM10 domain occupies 180-209; that stretch reads ACNWYGTLTPLCNNTSNGWGYEDGRSCVAR. Cystine bridges form between Cys-181/Cys-212 and Cys-191/Cys-206. The Nucleophile role is filled by Asp-276. Catalysis depends on Asp-393, which acts as the Proton donor.

This sequence belongs to the glycosyl hydrolase 45 (cellulase K) family.

The protein resides in the periplasm. The catalysed reaction is Endohydrolysis of (1-&gt;4)-beta-D-glucosidic linkages in cellulose, lichenin and cereal beta-D-glucans.. In terms of biological role, this enzyme catalyzes the endohydrolysis of 1,4-beta-glucosidic linkages in cellulose, lichenin and cereal beta-D-glucans. EGB is most active against barley beta-glucan, but showed significant activity against amorphous and crystalline cellulose. The polypeptide is Endoglucanase B (celB) (Cellvibrio japonicus (strain Ueda107) (Pseudomonas fluorescens subsp. cellulosa)).